Consider the following 463-residue polypeptide: L-seryl-tRNA(Sec) selenium transferase (463 aa).

N6-(pyridoxal phosphate)lysine is present on lysine 295.

It belongs to the SelA family. In terms of assembly, homodecamer; pentamer of dimers. Binds only one seryl-tRNA(Sec) per dimer. Pyridoxal 5'-phosphate is required as a cofactor.

The protein localises to the cytoplasm. It carries out the reaction L-seryl-tRNA(Sec) + selenophosphate + H(+) = L-selenocysteinyl-tRNA(Sec) + phosphate. The protein operates within aminoacyl-tRNA biosynthesis; selenocysteinyl-tRNA(Sec) biosynthesis; selenocysteinyl-tRNA(Sec) from L-seryl-tRNA(Sec) (bacterial route): step 1/1. Its function is as follows. Converts seryl-tRNA(Sec) to selenocysteinyl-tRNA(Sec) required for selenoprotein biosynthesis. This chain is L-seryl-tRNA(Sec) selenium transferase, found in Edwardsiella ictaluri (strain 93-146).